The chain runs to 128 residues: Large ribosomal subunit protein bL12 (128 aa).

This sequence belongs to the bacterial ribosomal protein bL12 family. Homodimer. Part of the ribosomal stalk of the 50S ribosomal subunit. Forms a multimeric L10(L12)X complex, where L10 forms an elongated spine to which 2 to 4 L12 dimers bind in a sequential fashion. Binds GTP-bound translation factors.

In terms of biological role, forms part of the ribosomal stalk which helps the ribosome interact with GTP-bound translation factors. Is thus essential for accurate translation. This is Large ribosomal subunit protein bL12 from Aquifex aeolicus (strain VF5).